We begin with the raw amino-acid sequence, 101 residues long: Small ribosomal subunit protein uS14c (101 aa).

This sequence belongs to the universal ribosomal protein uS14 family. In terms of assembly, part of the 30S ribosomal subunit.

The protein localises to the plastid. In terms of biological role, binds 16S rRNA, required for the assembly of 30S particles. The polypeptide is Small ribosomal subunit protein uS14c (Helicosporidium sp. subsp. Simulium jonesii (Green alga)).